We begin with the raw amino-acid sequence, 387 residues long: 3-ketoacyl-CoA thiolase (387 aa).

Cysteine 91 (acyl-thioester intermediate) is an active-site residue. Active-site proton acceptor residues include histidine 343 and cysteine 373.

Belongs to the thiolase-like superfamily. Thiolase family. As to quaternary structure, heterotetramer of two alpha chains (FadB) and two beta chains (FadA).

Its subcellular location is the cytoplasm. The enzyme catalyses an acyl-CoA + acetyl-CoA = a 3-oxoacyl-CoA + CoA. The protein operates within lipid metabolism; fatty acid beta-oxidation. Functionally, catalyzes the final step of fatty acid oxidation in which acetyl-CoA is released and the CoA ester of a fatty acid two carbons shorter is formed. This is 3-ketoacyl-CoA thiolase from Aliivibrio salmonicida (strain LFI1238) (Vibrio salmonicida (strain LFI1238)).